Reading from the N-terminus, the 447-residue chain is Multicopper oxidase mco (447 aa).

Residues 1-25 are compositionally biased toward basic and acidic residues; sequence MMNMKEDKKNTMDMKNMKHHDERKK. The disordered stretch occupies residues 1-28; sequence MMNMKEDKKNTMDMKNMKHHDERKKLNS. 12 residues coordinate Cu cation: H107, H109, H147, H149, H375, H378, H380, H428, C429, H430, H434, and M439.

It belongs to the multicopper oxidase family. Cu cation is required as a cofactor.

The protein resides in the cytoplasm. Its function is as follows. May be involved in copper homeostasis and oxidative stress response. The polypeptide is Multicopper oxidase mco (mco) (Staphylococcus epidermidis (strain ATCC 12228 / FDA PCI 1200)).